A 272-amino-acid chain; its full sequence is Tryptophan synthase alpha chain (272 aa).

Residues glutamate 49 and aspartate 60 each act as proton acceptor in the active site.

This sequence belongs to the TrpA family. In terms of assembly, tetramer of two alpha and two beta chains.

The catalysed reaction is (1S,2R)-1-C-(indol-3-yl)glycerol 3-phosphate + L-serine = D-glyceraldehyde 3-phosphate + L-tryptophan + H2O. Its pathway is amino-acid biosynthesis; L-tryptophan biosynthesis; L-tryptophan from chorismate: step 5/5. Functionally, the alpha subunit is responsible for the aldol cleavage of indoleglycerol phosphate to indole and glyceraldehyde 3-phosphate. The polypeptide is Tryptophan synthase alpha chain (Hydrogenovibrio crunogenus (strain DSM 25203 / XCL-2) (Thiomicrospira crunogena)).